The primary structure comprises 387 residues: Alkanesulfonate monooxygenase (387 aa).

The protein belongs to the SsuD family.

It carries out the reaction an alkanesulfonate + FMNH2 + O2 = an aldehyde + FMN + sulfite + H2O + 2 H(+). Catalyzes the desulfonation of aliphatic sulfonates. In Ralstonia pickettii (strain 12J), this protein is Alkanesulfonate monooxygenase.